We begin with the raw amino-acid sequence, 284 residues long: Lipoyl synthase (284 aa).

[4Fe-4S] cluster-binding residues include cysteine 38, cysteine 43, cysteine 49, cysteine 64, cysteine 68, cysteine 71, and serine 277. The Radical SAM core domain occupies 50–266 (WSRGTATFLL…RDEALGMGFS (217 aa)).

This sequence belongs to the radical SAM superfamily. Lipoyl synthase family. The cofactor is [4Fe-4S] cluster.

Its subcellular location is the cytoplasm. It carries out the reaction [[Fe-S] cluster scaffold protein carrying a second [4Fe-4S](2+) cluster] + N(6)-octanoyl-L-lysyl-[protein] + 2 oxidized [2Fe-2S]-[ferredoxin] + 2 S-adenosyl-L-methionine + 4 H(+) = [[Fe-S] cluster scaffold protein] + N(6)-[(R)-dihydrolipoyl]-L-lysyl-[protein] + 4 Fe(3+) + 2 hydrogen sulfide + 2 5'-deoxyadenosine + 2 L-methionine + 2 reduced [2Fe-2S]-[ferredoxin]. It functions in the pathway protein modification; protein lipoylation via endogenous pathway; protein N(6)-(lipoyl)lysine from octanoyl-[acyl-carrier-protein]: step 2/2. Its function is as follows. Catalyzes the radical-mediated insertion of two sulfur atoms into the C-6 and C-8 positions of the octanoyl moiety bound to the lipoyl domains of lipoate-dependent enzymes, thereby converting the octanoylated domains into lipoylated derivatives. The polypeptide is Lipoyl synthase (Chlorobium phaeovibrioides (strain DSM 265 / 1930) (Prosthecochloris vibrioformis (strain DSM 265))).